The following is a 392-amino-acid chain: NAC domain-containing protein 58 (392 aa).

The NAC domain maps to L9 to K173. The disordered stretch occupies residues S317–Q345.

As to expression, expressed in leaves, nodes, internodes and mature seeds. Highly expressed in roots. Expressed in leaf sheaths, flag leaves and inflorescences. Expressed in primary and lateral roots, particularly in the vascular tissues. Expressed in the primary phloem of the culm and leaf sheaths. Expressed principally in the primary phloem and in the peripheral zone of the leaf vascular bundles. Expressed in the floral tissues.

The protein localises to the nucleus. Transcription factor that acts as a positive regulator of the jasmonate (JA) pathway to mediate leaf senescence. May directly regulate LOX2, AOC, AOS2, AOC1 and OPR7, which are genes involved in the biosynthesis of JA. Regulates positively leaf senescence by directly targeting senescence-associated genes (SAGs) related to chlorophyll degradation, nutrient transport and other genes associated with abscisic acid-induced leaf senescence. Transcription activator that plays a role in mediating abiotic stress responses through the abscisic acid (ABA) pathway. Possesses transcriptional activator activity in yeast. The sequence is that of NAC domain-containing protein 58 from Oryza sativa subsp. japonica (Rice).